Reading from the N-terminus, the 64-residue chain is DNA gyrase inhibitor YacG (64 aa).

4 residues coordinate Zn(2+): cysteine 7, cysteine 10, cysteine 26, and cysteine 30. Residues 44 to 64 are disordered; the sequence is SIPGEPVVIANDDYNNEESDY.

It belongs to the DNA gyrase inhibitor YacG family. Interacts with GyrB. Requires Zn(2+) as cofactor.

In terms of biological role, inhibits all the catalytic activities of DNA gyrase by preventing its interaction with DNA. Acts by binding directly to the C-terminal domain of GyrB, which probably disrupts DNA binding by the gyrase. The chain is DNA gyrase inhibitor YacG from Idiomarina loihiensis (strain ATCC BAA-735 / DSM 15497 / L2-TR).